The sequence spans 337 residues: Autophagy protein 5 (337 aa).

Lysine 128 is covalently cross-linked (Glycyl lysine isopeptide (Lys-Gly) (interchain with G-Cter in ATG12)). A disordered region spans residues 271-290 (RAQTSGEERSIDDTEEADGS). Residues 276 to 290 (GEERSIDDTEEADGS) show a composition bias toward basic and acidic residues.

This sequence belongs to the ATG5 family. As to quaternary structure, conjugated to ATG12. Conjugated to ATG12; which is essential for autophagy. Conjugation with ATG12 involves ATG7 as an E1-like activating enzyme and ATG10 as an E2-like conjugating enzyme. In terms of tissue distribution, ubiquitous.

It localises to the cytoplasm. Its function is as follows. Required for autophagy. Conjugation to ATG12 is essential for plant nutrient recycling. Involved in a negative feedback loop that modulates NPR1-dependent salicylic acid (SA) signaling and limits senescence and immunity-related programmed cell death (PCD) in plants. Involved in complete proteolysis of chloroplast stroma proteins in senescent leaves. Involved in the degradation of damaged peroxisomes. The sequence is that of Autophagy protein 5 from Arabidopsis thaliana (Mouse-ear cress).